The sequence spans 338 residues: uncharacterized protein (338 aa).

A TNase-like domain is found at 144 to 321 (HTLPVDVKAV…RAARVGLWAS (178 aa)). Catalysis depends on residues Arg228, Glu236, and Arg270.

This is an uncharacterized protein from Capnoides sempervirens (Rock-harlequin).